Reading from the N-terminus, the 445-residue chain is Phosphoglucosamine mutase (445 aa).

Serine 102 serves as the catalytic Phosphoserine intermediate. Mg(2+) contacts are provided by serine 102, aspartate 241, aspartate 243, and aspartate 245. Phosphoserine is present on serine 102.

It belongs to the phosphohexose mutase family. Mg(2+) is required as a cofactor. Post-translationally, activated by phosphorylation.

It catalyses the reaction alpha-D-glucosamine 1-phosphate = D-glucosamine 6-phosphate. In terms of biological role, catalyzes the conversion of glucosamine-6-phosphate to glucosamine-1-phosphate. This chain is Phosphoglucosamine mutase, found in Salmonella dublin (strain CT_02021853).